Consider the following 583-residue polypeptide: Phosphoglucomutase, cytoplasmic (583 aa).

The segment at 1 to 20 (MATFKVSRVETKPYDGQKPG) is disordered. Alpha-D-glucose 1,6-bisphosphate contacts are provided by R25 and S124. The active-site Phosphoserine intermediate is the S124. Residues S124, D300, D302, and D304 each coordinate Mg(2+). The residue at position 124 (S124) is a Phosphoserine. Positions 304, 305, 368, 387, 389, and 400 each coordinate alpha-D-glucose 1,6-bisphosphate.

This sequence belongs to the phosphohexose mutase family. Monomer. It depends on Mg(2+) as a cofactor.

It localises to the cytoplasm. It catalyses the reaction alpha-D-glucose 1-phosphate = alpha-D-glucose 6-phosphate. The enzyme catalyses O-phospho-L-seryl-[protein] + alpha-D-glucose 1-phosphate = alpha-D-glucose 1,6-bisphosphate + L-seryl-[protein]. The catalysed reaction is alpha-D-glucose 1,6-bisphosphate + L-seryl-[protein] = O-phospho-L-seryl-[protein] + alpha-D-glucose 6-phosphate. In terms of biological role, catalyzes the reversible isomerization of alpha-D-glucose 1-phosphate to alpha-D-glucose 6-phosphate. The mechanism proceeds via the intermediate compound alpha-D-glucose 1,6-bisphosphate. This enzyme participates in both the breakdown and synthesis of glucose. The sequence is that of Phosphoglucomutase, cytoplasmic (PGM1) from Mesembryanthemum crystallinum (Common ice plant).